We begin with the raw amino-acid sequence, 828 residues long: Protein kintoun (828 aa).

Disordered stretches follow at residues 1–31 (MSGS…DEPI), 223–250 (KNPT…EGEP), 383–424 (DSGV…PTSN), 556–668 (APVQ…HRGI), and 741–828 (KKNQ…EDLI). The segment covering 9–22 (RNKHSKGNLKHNNN) has biased composition (basic residues). A Phosphoserine modification is found at serine 384. Positions 395–414 (PVEEEEDGEDEIEAEEEEEE) are enriched in acidic residues. Residues 556–573 (APVQEDKPGDIQFKRNDQ) show a composition bias toward basic and acidic residues. Over residues 591–601 (EREEGEIEEAE) the composition is skewed to acidic residues. Positions 606-620 (KKSASKKQRGKRNKK) are enriched in basic residues. Over residues 625-641 (SESACVSLPTSVDSQPM) the composition is skewed to polar residues. Basic residues predominate over residues 741 to 755 (KKNQKRRDCKLRAQQ). Serine 759 bears the Phosphoserine mark. The span at 788–808 (DSGLDLTRHNKKRELAEEADN) shows a compositional bias: basic and acidic residues. Residues 815–828 (EMDDDDDDEDEDLI) are compositionally biased toward acidic residues.

The protein belongs to the PIH1 family. Kintoun subfamily. Interacts with Pp1alpha-96A, Pp1-87B, Pp1-13C and flw.

The protein resides in the cytoplasm. In terms of biological role, required for cytoplasmic pre-assembly of axonemal dyneins, thereby playing a central role in motility in cilia and flagella. Involved in pre-assembly of dynein arm complexes in the cytoplasm before intraflagellar transport loads them for the ciliary compartment. This Drosophila willistoni (Fruit fly) protein is Protein kintoun.